We begin with the raw amino-acid sequence, 521 residues long: NAD(P)H-quinone oxidoreductase subunit 2 (521 aa).

Transmembrane regions (helical) follow at residues 15–35 (ILPE…DITF), 42–62 (WTPY…YTQW), 79–99 (LSIV…LMSV), 109–126 (IGEF…AMFL), 131–153 (ELVM…TGYM), 167–187 (LLIG…LYGL), 208–228 (LALV…IAAV), 242–262 (PTPV…ALAI), 276–296 (WQFI…VVAI), 304–324 (MLAY…VIGT), 332–352 (VFYL…VILF), 376–396 (LALS…GFFG), 398–418 (LYLF…LGLI), and 464–484 (VGLV…NPLL).

This sequence belongs to the complex I subunit 2 family. NDH-1 can be composed of about 15 different subunits; different subcomplexes with different compositions have been identified which probably have different functions.

It localises to the cellular thylakoid membrane. The catalysed reaction is a plastoquinone + NADH + (n+1) H(+)(in) = a plastoquinol + NAD(+) + n H(+)(out). The enzyme catalyses a plastoquinone + NADPH + (n+1) H(+)(in) = a plastoquinol + NADP(+) + n H(+)(out). NDH-1 shuttles electrons from an unknown electron donor, via FMN and iron-sulfur (Fe-S) centers, to quinones in the respiratory and/or the photosynthetic chain. The immediate electron acceptor for the enzyme in this species is believed to be plastoquinone. Couples the redox reaction to proton translocation, and thus conserves the redox energy in a proton gradient. Cyanobacterial NDH-1 also plays a role in inorganic carbon-concentration. This is NAD(P)H-quinone oxidoreductase subunit 2 from Acaryochloris marina (strain MBIC 11017).